Reading from the N-terminus, the 111-residue chain is Disintegrin subunit alpha (111 aa).

Residues 1–20 (MIQVLLVTICLAVFPYQGSS) form the signal peptide. Residues 21 to 44 (IILESGNVNDYEVVYPRKITPLPK) constitute a propeptide that is removed on maturation. One can recognise a Disintegrin domain in the interval 45 to 111 (GAVQPKNPCC…GDCPRKHFYA (67 aa)). 4 disulfide bridges follow: cysteine 53-cysteine 76, cysteine 67-cysteine 73, cysteine 72-cysteine 97, and cysteine 85-cysteine 104. Positions 89–91 (RGD) match the Cell attachment site motif. The propeptide occupies 110-111 (YA).

This sequence belongs to the disintegrin family. Dimeric disintegrin subfamily. In terms of assembly, heterodimer with subunit beta; disulfide-linked. Expressed by the venom gland.

It localises to the secreted. Acts by binding to alpha-IIb/beta-3 (ITGA2B/ITGB3) on the platelet surface and inhibits both ADP-induced platelet aggregation and platelet aggregate dissociation in human platelet-rich plasma. This Agkistrodon piscivorus leucostoma (Western cottonmouth) protein is Disintegrin subunit alpha.